A 356-amino-acid chain; its full sequence is UDP-N-acetylglucosamine--N-acetylmuramyl-(pentapeptide) pyrophosphoryl-undecaprenol N-acetylglucosamine transferase (356 aa).

Residues Ser-198 and Gln-289 each coordinate UDP-N-acetyl-alpha-D-glucosamine.

It belongs to the glycosyltransferase 28 family. MurG subfamily.

The protein resides in the cell membrane. The catalysed reaction is Mur2Ac(oyl-L-Ala-gamma-D-Glu-L-Lys-D-Ala-D-Ala)-di-trans,octa-cis-undecaprenyl diphosphate + UDP-N-acetyl-alpha-D-glucosamine = beta-D-GlcNAc-(1-&gt;4)-Mur2Ac(oyl-L-Ala-gamma-D-Glu-L-Lys-D-Ala-D-Ala)-di-trans,octa-cis-undecaprenyl diphosphate + UDP + H(+). It functions in the pathway cell wall biogenesis; peptidoglycan biosynthesis. In terms of biological role, cell wall formation. Catalyzes the transfer of a GlcNAc subunit on undecaprenyl-pyrophosphoryl-MurNAc-pentapeptide (lipid intermediate I) to form undecaprenyl-pyrophosphoryl-MurNAc-(pentapeptide)GlcNAc (lipid intermediate II). The chain is UDP-N-acetylglucosamine--N-acetylmuramyl-(pentapeptide) pyrophosphoryl-undecaprenol N-acetylglucosamine transferase from Streptococcus thermophilus (strain ATCC BAA-491 / LMD-9).